The primary structure comprises 182 residues: Ribosome-recycling factor (182 aa).

It belongs to the RRF family.

The protein localises to the cytoplasm. In terms of biological role, responsible for the release of ribosomes from messenger RNA at the termination of protein biosynthesis. May increase the efficiency of translation by recycling ribosomes from one round of translation to another. This is Ribosome-recycling factor from Synechococcus sp. (strain WH7803).